The following is a 164-amino-acid chain: S-ribosylhomocysteine lyase (164 aa).

Fe cation is bound by residues H54, H58, and C128.

The protein belongs to the LuxS family. As to quaternary structure, homodimer. The cofactor is Fe cation.

The catalysed reaction is S-(5-deoxy-D-ribos-5-yl)-L-homocysteine = (S)-4,5-dihydroxypentane-2,3-dione + L-homocysteine. Its function is as follows. Involved in the synthesis of autoinducer 2 (AI-2) which is secreted by bacteria and is used to communicate both the cell density and the metabolic potential of the environment. The regulation of gene expression in response to changes in cell density is called quorum sensing. Catalyzes the transformation of S-ribosylhomocysteine (RHC) to homocysteine (HC) and 4,5-dihydroxy-2,3-pentadione (DPD). This is S-ribosylhomocysteine lyase from Campylobacter jejuni subsp. doylei (strain ATCC BAA-1458 / RM4099 / 269.97).